The primary structure comprises 582 residues: Threonine--tRNA ligase (582 aa).

Positions 185 to 478 (DHRKLGKELE…LTEQYGGAFP (294 aa)) are catalytic. Positions 278, 329, and 455 each coordinate Zn(2+).

It belongs to the class-II aminoacyl-tRNA synthetase family. Homodimer. It depends on Zn(2+) as a cofactor.

It localises to the cytoplasm. The enzyme catalyses tRNA(Thr) + L-threonine + ATP = L-threonyl-tRNA(Thr) + AMP + diphosphate + H(+). Catalyzes the attachment of threonine to tRNA(Thr) in a two-step reaction: L-threonine is first activated by ATP to form Thr-AMP and then transferred to the acceptor end of tRNA(Thr). Also edits incorrectly charged L-seryl-tRNA(Thr). In Dehalococcoides mccartyi (strain ATCC BAA-2100 / JCM 16839 / KCTC 5957 / BAV1), this protein is Threonine--tRNA ligase.